Here is a 215-residue protein sequence, read N- to C-terminus: WAT1-related protein At3g28060 (215 aa).

5 helical membrane passes run 48 to 68, 82 to 102, 117 to 137, 146 to 166, and 176 to 196; these read IIIG…AVAY, FALA…VSLF, IMLI…VVES, VFLA…GAIF, and VIGG…FHIA. The EamA domain occupies 65 to 186; sequence AVAYIVQTHI…IGGTLISIGF (122 aa).

The protein belongs to the drug/metabolite transporter (DMT) superfamily. Plant drug/metabolite exporter (P-DME) (TC 2.A.7.4) family.

It localises to the membrane. This is WAT1-related protein At3g28060 from Arabidopsis thaliana (Mouse-ear cress).